The chain runs to 157 residues: Crossover junction endodeoxyribonuclease RuvC (157 aa).

Catalysis depends on residues D7, E67, and D140. Mg(2+)-binding residues include D7, E67, and D140.

It belongs to the RuvC family. As to quaternary structure, homodimer which binds Holliday junction (HJ) DNA. The HJ becomes 2-fold symmetrical on binding to RuvC with unstacked arms; it has a different conformation from HJ DNA in complex with RuvA. In the full resolvosome a probable DNA-RuvA(4)-RuvB(12)-RuvC(2) complex forms which resolves the HJ. Requires Mg(2+) as cofactor.

The protein resides in the cytoplasm. It carries out the reaction Endonucleolytic cleavage at a junction such as a reciprocal single-stranded crossover between two homologous DNA duplexes (Holliday junction).. Functionally, the RuvA-RuvB-RuvC complex processes Holliday junction (HJ) DNA during genetic recombination and DNA repair. Endonuclease that resolves HJ intermediates. Cleaves cruciform DNA by making single-stranded nicks across the HJ at symmetrical positions within the homologous arms, yielding a 5'-phosphate and a 3'-hydroxyl group; requires a central core of homology in the junction. The consensus cleavage sequence is 5'-(A/T)TT(C/G)-3'. Cleavage occurs on the 3'-side of the TT dinucleotide at the point of strand exchange. HJ branch migration catalyzed by RuvA-RuvB allows RuvC to scan DNA until it finds its consensus sequence, where it cleaves and resolves the cruciform DNA. The sequence is that of Crossover junction endodeoxyribonuclease RuvC from Rickettsia africae (strain ESF-5).